Consider the following 751-residue polypeptide: ABC transporter G family member 22 (751 aa).

A disordered region spans residues 26 to 81 (ADIRSPHGSMDANGVPATAPAAVGGGGTLSRKSSRRLMGMSPGRSSGAGTHIRKSR). The ABC transporter domain occupies 157-403 (LKFRDVTYKV…FSSIGCSPLI (247 aa)). 197-204 (GPSGSGKT) contacts ATP. One can recognise an ABC transmembrane type-2 domain in the interval 498–707 (EQYCILFCRG…TYKLLLKVQY (210 aa)). Transmembrane regions (helical) follow at residues 516–536 (FSWL…LLWW), 552–572 (LLFF…IFAF), 602–622 (LPLD…MTGL), 634–654 (LTVF…GAIL), 666–686 (VTVM…PVFI), and 722–742 (GLTE…LAYL).

Belongs to the ABC transporter superfamily. ABCG family. Eye pigment precursor importer (TC 3.A.1.204) subfamily.

The protein resides in the membrane. The polypeptide is ABC transporter G family member 22 (ABCG22) (Arabidopsis thaliana (Mouse-ear cress)).